A 1268-amino-acid chain; its full sequence is SR-related and CTD-associated factor 8 (1268 aa).

The CID domain maps to 1-139; the sequence is MEAVKTFNSE…PLLDMAAGIP (139 aa). Phosphothreonine is present on T6. K18 participates in a covalent cross-link: Glycyl lysine isopeptide (Lys-Gly) (interchain with G-Cter in SUMO1). At S273 the chain carries Phosphoserine. 2 disordered regions span residues 322–355 and 385–469; these read QQQP…QQHF and EIFE…PVRS. Over residues 342–354 the composition is skewed to polar residues; the sequence is HSASPSQGSSQQH. Over residues 394–443 the composition is skewed to basic residues; sequence VAVRSRSRTHSRSRSRSPRKRRSRSRSGSRKRKHRKRSRSRSRERKRKSS. Basic and acidic residues predominate over residues 447 to 461; that stretch reads SSERRAREREKERQK. Residues 477-551 enclose the RRM domain; it reads TTLWVGQVDK…KVIKIAWALN (75 aa). T615 carries the phosphothreonine modification. A Phosphoserine modification is found at S617. Positions 753–808 are disordered; that stretch reads AGNVFNPPSKAEPEEKVPHLTEHQIPSGENTRPVIPSDIPSSAPMLAQPPGASNTS. Residues 763-774 show a composition bias toward basic and acidic residues; it reads AEPEEKVPHLTE. Asymmetric dimethylarginine is present on residues R915, R925, and R936. The tract at residues 947 to 1063 is disordered; the sequence is QRGIPPPSVL…GRDHFGRPPV (117 aa). Positions 961-970 are enriched in pro residues; that stretch reads HPPPRGPFPP. Basic and acidic residues-rich tracts occupy residues 1009–1025 and 1032–1063; these read EGDR…REGI and DVRD…RPPV. An Asymmetric dimethylarginine modification is found at R1071. A disordered region spans residues 1199-1268; sequence ATSQRKGENV…VVESTETEGT (70 aa). Over residues 1249-1262 the composition is skewed to low complexity; it reads GTAAGVESEAVVES.

In terms of assembly, interacts with POLR2A; via C-terminal heptapeptide repeat domain (CTD) phosphorylated at 'Ser-2' and 'Ser-5'. Identified in a complex with CDC5L and other spliceosomal proteins.

The protein localises to the nucleus. The protein resides in the nucleus matrix. Anti-terminator protein required to prevent early mRNA termination during transcription. Together with SCAF4, acts by suppressing the use of early, alternative poly(A) sites, thereby preventing the accumulation of non-functional truncated proteins. Mechanistically, associates with the phosphorylated C-terminal heptapeptide repeat domain (CTD) of the largest RNA polymerase II subunit (POLR2A), and subsequently binds nascent RNA upstream of early polyadenylation sites to prevent premature mRNA transcript cleavage and polyadenylation. Independently of SCAF4, also acts as a positive regulator of transcript elongation. This chain is SR-related and CTD-associated factor 8, found in Rattus norvegicus (Rat).